A 289-amino-acid polypeptide reads, in one-letter code: Thioredoxin-like protein 1 (289 aa).

Residues 2 to 109 enclose the Thioredoxin domain; the sequence is VGVKPVGSDP…EEKIKQHLEN (108 aa). A disulfide bond links cysteine 34 and cysteine 37. Serine 113 is modified (phosphoserine). The 171-residue stretch at 115 to 285 folds into the PITH domain; that stretch reads EDADIPKGYM…NDFKRVVGKK (171 aa).

In terms of assembly, component of the 19S regulatory cap of the 26S proteasome. Interacts with PSMD14/RPN11. Interacts with, and reduces EEF1A1.

It localises to the cytoplasm. Its subcellular location is the nucleus. Functionally, active thioredoxin with a redox potential of about -250 mV. This chain is Thioredoxin-like protein 1 (Txnl1), found in Mus musculus (Mouse).